Here is a 117-residue protein sequence, read N- to C-terminus: Putative iron-sulfur cluster insertion protein ErpA (117 aa).

Residues C45, C109, and C111 each contribute to the iron-sulfur cluster site.

This sequence belongs to the HesB/IscA family. As to quaternary structure, homodimer. Iron-sulfur cluster serves as cofactor.

Functionally, required for insertion of 4Fe-4S clusters. The polypeptide is Putative iron-sulfur cluster insertion protein ErpA (Methylobacillus flagellatus (strain ATCC 51484 / DSM 6875 / VKM B-1610 / KT)).